Consider the following 114-residue polypeptide: Non-specific lipid-transfer protein 1 (114 aa).

The signal sequence occupies residues 1–23 (MEIAGKIACFVVLCMVVAAPCAE). Intrachain disulfides connect C27–C73, C37–C50, C51–C96, and C71–C110.

The protein belongs to the plant LTP family. In terms of tissue distribution, high expression in leaf epidermis and shoot apex, and also in root epidermis during seedling germination.

Its function is as follows. Plant non-specific lipid-transfer proteins transfer phospholipids as well as galactolipids across membranes. Binds cis-unsaturated fatty acids and jasmonic acid with a higher affinity than linear chain fatty acids. Formation of the complex with jasmonic acid results in a conformational change facilitating the LPT1 binding on the elicitin plasma membrane receptor that is known to be involved in plant defense induction. May also play a role in wax or cutin deposition in the cell walls of expanding epidermal cells and certain secretory tissues. This Nicotiana tabacum (Common tobacco) protein is Non-specific lipid-transfer protein 1 (LTP1).